We begin with the raw amino-acid sequence, 933 residues long: Anoctamin-7 (933 aa).

Topologically, residues 1–355 are cytoplasmic; that stretch reads MRMAATAWAG…YFAWLGFYTG (355 aa). The segment at 43 to 101 is disordered; the sequence is ETSSGSHCARSRMLRRRAQEEDSTVLIDVSPPEAEKRGSYGSTAHASEPGGQQAAACRA. A helical transmembrane segment spans residues 356-376; it reads WLLPAAVVGTLVFLVGCFLVF. At 377 to 420 the chain is on the extracellular side; the sequence is SDIPTQELCGSKDSFEMCPLCLDCPFWLLSSACALAQAGRLFDH. A helical membrane pass occupies residues 421–441; the sequence is GGTVFFSLFMALWAVLLLEYW. Residues 442–499 lie on the Cytoplasmic side of the membrane; it reads KRKSATLAYRWDCSDYEDTEERPRPQFAASAPMTAPNPITGEDEPYFPERSRARRMLA. The chain crosses the membrane as a helical span at residues 500–520; that stretch reads GSVVIVVMVAVVVMCLVSIIL. The Extracellular segment spans residues 521–550; sequence YRAIMAIVVSRSGNTLLAAWASRIASLTGS. Residues 551 to 571 form a helical membrane-spanning segment; it reads VVNLVFILILSKIYVSLAHVL. At 572–588 the chain is on the cytoplasmic side; the sequence is TRWEMHRTQTKFEDAFT. A helical transmembrane segment spans residues 589–609; sequence LKVFIFQFVNFYSSPVYIAFF. The Extracellular portion of the chain corresponds to 610–714; the sequence is KGRFVGYPGN…FDEYLEMVLQ (105 aa). Residues 715 to 735 traverse the membrane as a helical segment; it reads FGFVTIFVAACPLAPLFALLN. Residues 736–763 are Cytoplasmic-facing; that stretch reads NWVEIRLDARKFVCEYRRPVAERAQDIG. The helical transmembrane segment at 764–784 threads the bilayer; sequence IWFHILAGLTHLAVISNAFLL. The Extracellular portion of the chain corresponds to 785–843; the sequence is AFSSDFLPRAYYRWTRAHDLRGFLNFTLARAPSSFAAAHNRTCRYRAFRDDDGHYSQTY. N-linked (GlcNAc...) asparagine glycans are attached at residues Asn809 and Asn824. The chain crosses the membrane as a helical span at residues 844 to 864; the sequence is WNLLAIRLAFVIVFEHVVFSV. Topologically, residues 865–933 are cytoplasmic; the sequence is GRLLDLLVPD…TVPKASQLQQ (69 aa). The tract at residues 902-933 is disordered; it reads GTNGTKDEQPEGSELSSHWTPFTVPKASQLQQ. Over residues 915–933 the composition is skewed to polar residues; the sequence is ELSSHWTPFTVPKASQLQQ.

This sequence belongs to the anoctamin family. As to expression, specifically expressed in epithelial cells of the prostate (at protein level).

The protein localises to the cell membrane. Its subcellular location is the cell junction. It localises to the endoplasmic reticulum. It is found in the cytoplasm. The protein resides in the cytosol. The catalysed reaction is a 1,2-diacyl-sn-glycero-3-phospho-L-serine(in) = a 1,2-diacyl-sn-glycero-3-phospho-L-serine(out). It carries out the reaction a beta-D-galactosyl-(1&lt;-&gt;1')-N-acylsphing-4-enine(out) = a beta-D-galactosyl-(1&lt;-&gt;1')-N-acylsphing-4-enine(in). It catalyses the reaction a 1,2-diacyl-sn-glycero-3-phosphocholine(in) = a 1,2-diacyl-sn-glycero-3-phosphocholine(out). In terms of biological role, has calcium-dependent phospholipid scramblase activity; scrambles phosphatidylserine, phosphatidylcholine and galactosylceramide. Does not exhibit calcium-activated chloride channel (CaCC) activity. May play a role in cell-cell interactions. The sequence is that of Anoctamin-7 (ANO7) from Homo sapiens (Human).